A 377-amino-acid chain; its full sequence is UPF0425 pyridoxal phosphate-dependent protein MTH_1914 (377 aa).

Lys-207 carries the post-translational modification N6-(pyridoxal phosphate)lysine.

The protein belongs to the UPF0425 family. It depends on pyridoxal 5'-phosphate as a cofactor.

In Methanothermobacter thermautotrophicus (strain ATCC 29096 / DSM 1053 / JCM 10044 / NBRC 100330 / Delta H) (Methanobacterium thermoautotrophicum), this protein is UPF0425 pyridoxal phosphate-dependent protein MTH_1914.